Consider the following 269-residue polypeptide: Cytochrome c oxidase subunit 3 (269 aa).

A run of 7 helical transmembrane segments spans residues 21 to 41 (PWPI…ALTM), 45 to 65 (IGHM…ATLW), 90 to 110 (GFLL…WAYF), 138 to 160 (PLLN…HGLV), 167 to 187 (ALSG…CQYI), 205 to 225 (FYAG…MLGI), and 247 to 267 (VLYC…FYWW).

Belongs to the cytochrome c oxidase subunit 3 family. Component of the cytochrome c oxidase (complex IV, CIV), a multisubunit enzyme composed of a catalytic core of 3 subunits and several supernumerary subunits. The complex exists as a monomer or a dimer and forms supercomplexes (SCs) in the inner mitochondrial membrane with ubiquinol-cytochrome c oxidoreductase (cytochrome b-c1 complex, complex III, CIII).

The protein localises to the mitochondrion inner membrane. It catalyses the reaction 4 Fe(II)-[cytochrome c] + O2 + 8 H(+)(in) = 4 Fe(III)-[cytochrome c] + 2 H2O + 4 H(+)(out). Component of the cytochrome c oxidase, the last enzyme in the mitochondrial electron transport chain which drives oxidative phosphorylation. The respiratory chain contains 3 multisubunit complexes succinate dehydrogenase (complex II, CII), ubiquinol-cytochrome c oxidoreductase (cytochrome b-c1 complex, complex III, CIII) and cytochrome c oxidase (complex IV, CIV), that cooperate to transfer electrons derived from NADH and succinate to molecular oxygen, creating an electrochemical gradient over the inner membrane that drives transmembrane transport and the ATP synthase. Cytochrome c oxidase is the component of the respiratory chain that catalyzes the reduction of oxygen to water. Electrons originating from reduced cytochrome c in the intermembrane space (IMS) are transferred via the dinuclear copper A center (CU(A)) of subunit 2 and heme A of subunit 1 to the active site in subunit 1, a binuclear center (BNC) formed by heme A3 and copper B (CU(B)). The BNC reduces molecular oxygen to 2 water molecules using 4 electrons from cytochrome c in the IMS and 4 protons from the mitochondrial matrix. The protein is Cytochrome c oxidase subunit 3 (COX3) of Kluyveromyces lactis (strain ATCC 8585 / CBS 2359 / DSM 70799 / NBRC 1267 / NRRL Y-1140 / WM37) (Yeast).